Consider the following 329-residue polypeptide: Sulfate/thiosulfate import ATP-binding protein CysA (329 aa).

One can recognise an ABC transporter domain in the interval 3–237 (IEIRNVSKNF…PASDFVYHFL (235 aa)). 35 to 42 (GPSGCGKT) contacts ATP.

It belongs to the ABC transporter superfamily. Sulfate/tungstate importer (TC 3.A.1.6) family. The complex is composed of two ATP-binding proteins (CysA), two transmembrane proteins (CysT and CysW) and a solute-binding protein (CysP).

It localises to the cell inner membrane. The enzyme catalyses sulfate(out) + ATP + H2O = sulfate(in) + ADP + phosphate + H(+). It catalyses the reaction thiosulfate(out) + ATP + H2O = thiosulfate(in) + ADP + phosphate + H(+). In terms of biological role, part of the ABC transporter complex CysAWTP involved in sulfate/thiosulfate import. Responsible for energy coupling to the transport system. The protein is Sulfate/thiosulfate import ATP-binding protein CysA of Pseudomonas aeruginosa (strain ATCC 15692 / DSM 22644 / CIP 104116 / JCM 14847 / LMG 12228 / 1C / PRS 101 / PAO1).